Reading from the N-terminus, the 373-residue chain is Ribosomal protein uL16 3-hydroxylase (373 aa).

One can recognise a JmjC domain in the interval 92–219; sequence PTAALMRPFR…LISGFADYVL (128 aa). Substrate is bound by residues serine 114, 125-127, arginine 140, and histidine 187; that span reads HLD. Fe cation-binding residues include histidine 125 and aspartate 127. Residue histidine 187 coordinates Fe cation.

This sequence belongs to the ROX family. RoxA/YcfD subfamily. As to quaternary structure, homodimer. Fe(2+) serves as cofactor.

The catalysed reaction is L-arginyl-[ribosomal protein uL16] + 2-oxoglutarate + O2 = (3R)-3-hydroxy-L-arginyl-[ribosomal protein uL16] + succinate + CO2. Its function is as follows. Growth-regulating oxygenase that catalyzes the hydroxylation of ribosomal protein uL16 on 'Arg-81'. This Escherichia coli (strain K12) protein is Ribosomal protein uL16 3-hydroxylase (roxA).